The sequence spans 248 residues: Probable transcriptional regulatory protein Noc_0137 (248 aa).

Belongs to the TACO1 family.

It is found in the cytoplasm. The protein is Probable transcriptional regulatory protein Noc_0137 of Nitrosococcus oceani (strain ATCC 19707 / BCRC 17464 / JCM 30415 / NCIMB 11848 / C-107).